We begin with the raw amino-acid sequence, 188 residues long: dCTP deaminase (188 aa).

DCTP is bound by residues 111–116, 135–137, Q156, Y170, and Q180; these read KSTYAR and TLE. E137 acts as the Proton donor/acceptor in catalysis.

It belongs to the dCTP deaminase family. In terms of assembly, homotrimer.

The catalysed reaction is dCTP + H2O + H(+) = dUTP + NH4(+). The protein operates within pyrimidine metabolism; dUMP biosynthesis; dUMP from dCTP (dUTP route): step 1/2. Functionally, catalyzes the deamination of dCTP to dUTP. The polypeptide is dCTP deaminase (Neisseria gonorrhoeae (strain ATCC 700825 / FA 1090)).